We begin with the raw amino-acid sequence, 350 residues long: tRNA uridine(34) hydroxylase (350 aa).

A Rhodanese domain is found at 146–240 (DDPDALFIDM…YARKAREQGL (95 aa)). Catalysis depends on C200, which acts as the Cysteine persulfide intermediate.

Belongs to the TrhO family.

The enzyme catalyses uridine(34) in tRNA + AH2 + O2 = 5-hydroxyuridine(34) in tRNA + A + H2O. In terms of biological role, catalyzes oxygen-dependent 5-hydroxyuridine (ho5U) modification at position 34 in tRNAs, the first step in 5-carboxymethoxyuridine (cmo5U) biosynthesis. May be part of an alternate pathway, which is able to bypass cmo5U biogenesis in a subset of tRNAs under aerobic conditions. This is tRNA uridine(34) hydroxylase from Escherichia coli O9:H4 (strain HS).